A 165-amino-acid chain; its full sequence is UPF0303 protein BceJ2315_15790 (165 aa).

It belongs to the UPF0303 family.

This chain is UPF0303 protein BceJ2315_15790, found in Burkholderia cenocepacia (strain ATCC BAA-245 / DSM 16553 / LMG 16656 / NCTC 13227 / J2315 / CF5610) (Burkholderia cepacia (strain J2315)).